A 329-amino-acid polypeptide reads, in one-letter code: 4-hydroxythreonine-4-phosphate dehydrogenase (329 aa).

The substrate site is built by H136 and T137. A divalent metal cation is bound by residues H166, H211, and H266. Substrate is bound by residues K274, N283, and R292.

It belongs to the PdxA family. In terms of assembly, homodimer. Zn(2+) serves as cofactor. Requires Mg(2+) as cofactor. Co(2+) is required as a cofactor.

It is found in the cytoplasm. It catalyses the reaction 4-(phosphooxy)-L-threonine + NAD(+) = 3-amino-2-oxopropyl phosphate + CO2 + NADH. It participates in cofactor biosynthesis; pyridoxine 5'-phosphate biosynthesis; pyridoxine 5'-phosphate from D-erythrose 4-phosphate: step 4/5. Its function is as follows. Catalyzes the NAD(P)-dependent oxidation of 4-(phosphooxy)-L-threonine (HTP) into 2-amino-3-oxo-4-(phosphooxy)butyric acid which spontaneously decarboxylates to form 3-amino-2-oxopropyl phosphate (AHAP). The polypeptide is 4-hydroxythreonine-4-phosphate dehydrogenase (Pseudomonas syringae pv. tomato (strain ATCC BAA-871 / DC3000)).